The primary structure comprises 524 residues: Nucleobase-ascorbate transporter 2 (524 aa).

12 helical membrane-spanning segments follow: residues 41–61 (YILA…MMGG), 69–89 (VVQT…LFGT), 91–111 (LPTV…IIHD), 133–153 (GAII…MWAI), 155–175 (SRFF…FGLF), 179–199 (FPVV…FVIF), 217–237 (FALI…TASG), 282–302 (AFAM…AFKA), 359–379 (RVIQ…KFGA), 380–400 (LFAS…FGLV), 419–439 (LFIV…FRDF), and 457–477 (DFLN…AVFL).

The protein belongs to the nucleobase:cation symporter-2 (NCS2) (TC 2.A.40) family. As to expression, expressed in cotyledons 10 days after imbibition (DAI). Expressed in the minor and major veins of cotyledons and leaves, in the shoot apex and pedicels. Expressed in the root meristems, root tips and lateral root primordia.

The protein localises to the membrane. The polypeptide is Nucleobase-ascorbate transporter 2 (NAT2) (Arabidopsis thaliana (Mouse-ear cress)).